We begin with the raw amino-acid sequence, 210 residues long: Large ribosomal subunit protein uL3 (210 aa).

Positions 131-165 are disordered; sequence GPMSHGSKYHRRVGSMGATTDPGRTFKGKKMPGRM.

Belongs to the universal ribosomal protein uL3 family. As to quaternary structure, part of the 50S ribosomal subunit. Forms a cluster with proteins L14 and L19.

Its function is as follows. One of the primary rRNA binding proteins, it binds directly near the 3'-end of the 23S rRNA, where it nucleates assembly of the 50S subunit. The protein is Large ribosomal subunit protein uL3 of Caldanaerobacter subterraneus subsp. tengcongensis (strain DSM 15242 / JCM 11007 / NBRC 100824 / MB4) (Thermoanaerobacter tengcongensis).